We begin with the raw amino-acid sequence, 100 residues long: Replication restart protein PriB (100 aa).

The SSB domain maps to 1–99 (MGFNNLVSLA…LRIQNIQEYK (99 aa)).

This sequence belongs to the PriB family. In terms of assembly, homodimer. Interacts with PriA and DnaT. Component of the replication restart primosome. Primosome assembly occurs via a 'hand-off' mechanism. PriA binds to replication forks, subsequently PriB then DnaT bind; DnaT then displaces ssDNA to generate the helicase loading substrate.

In terms of biological role, involved in the restart of stalled replication forks, which reloads the replicative helicase on sites other than the origin of replication; the PriA-PriB pathway is the major replication restart pathway. During primosome assembly it facilitates complex formation between PriA and DnaT on DNA; stabilizes PriA on DNA. Stimulates the DNA unwinding activity of PriA helicase. The protein is Replication restart protein PriB of Neisseria meningitidis serogroup B (strain ATCC BAA-335 / MC58).